Here is a 445-residue protein sequence, read N- to C-terminus: Phosphoglucosamine mutase (445 aa).

Ser-102 acts as the Phosphoserine intermediate in catalysis. Ser-102, Asp-241, Asp-243, and Asp-245 together coordinate Mg(2+). Ser-102 carries the phosphoserine modification.

This sequence belongs to the phosphohexose mutase family. Requires Mg(2+) as cofactor. In terms of processing, activated by phosphorylation.

The catalysed reaction is alpha-D-glucosamine 1-phosphate = D-glucosamine 6-phosphate. Functionally, catalyzes the conversion of glucosamine-6-phosphate to glucosamine-1-phosphate. The polypeptide is Phosphoglucosamine mutase (Shigella flexneri serotype 5b (strain 8401)).